Consider the following 537-residue polypeptide: 5,6-dihydroxyindole-2-carboxylic acid oxidase (537 aa).

The signal sequence occupies residues 1 to 24; it reads MKSYNVLPLAYISLFLMLFYQVWA. At 25 to 477 the chain is on the lumenal, melanosome side; it reads QFPRECANIE…WPGQEFTVSE (453 aa). Cystine bridges form between C30-C41, C42-C65, C56-C99, C101-C110, and C113-C122. N-linked (GlcNAc...) asparagine glycans are attached at residues N96 and N104. N-linked (GlcNAc...) asparagine glycosylation occurs at N181. Zn(2+) contacts are provided by H192, H215, and H224. 2 disulfide bridges follow: C258-C261 and C290-C303. Residues N304 and N350 are each glycosylated (N-linked (GlcNAc...) asparagine). Zn(2+) contacts are provided by H377 and H381. The N-linked (GlcNAc...) asparagine glycan is linked to N385. Residue H404 coordinates Zn(2+). Residues 478–501 traverse the membrane as a helical segment; the sequence is IITIAVVAALLLVAAIFGVASCLI. Residues 502–537 lie on the Cytoplasmic side of the membrane; the sequence is RSRSTKNEANQPLLTDHYQRYAEDYEELPNPNHSMV.

The protein belongs to the tyrosinase family. In terms of assembly, monomer. Interacts with ATP7A. Interacts with SLC45A2. Cu(2+) serves as cofactor. It depends on Zn(2+) as a cofactor. In terms of processing, glycosylated. As to expression, pigment cells.

The protein resides in the melanosome membrane. The enzyme catalyses 2 5,6-dihydroxyindole-2-carboxylate + O2 = 2 indole-5,6-quinone-2-carboxylate + 2 H2O. Its pathway is pigment biosynthesis; melanin biosynthesis. Functionally, plays a role in melanin biosynthesis. Catalyzes the oxidation of 5,6-dihydroxyindole-2-carboxylic acid (DHICA) into indole-5,6-quinone-2-carboxylic acid. May regulate or influence the type of melanin synthesized. Also to a lower extent, capable of hydroxylating tyrosine and producing melanin. This chain is 5,6-dihydroxyindole-2-carboxylic acid oxidase (Tyrp1), found in Mus musculus (Mouse).